The chain runs to 448 residues: C4-dicarboxylate transport protein (448 aa).

A run of 8 helical transmembrane segments spans residues 20–38 (LYFQVLVAIIAGIALGHFY), 53–75 (IRLVKMIIAPVIFLTVATGIAGM), 88–110 (AMIYFLVFSTLALIVGLIVANTV), 161–178 (ILQVLFFSVLFGIALGIV), 199–220 (LVAILMKAAPIGAFGAMAFTIG), 230–252 (LAMLIGTFYITSALFVFVVLGAV), 325–347 (LFIAQATGIHLSFGEQILLLLVA), and 362–384 (FITLAATLSVVPSVPVAGMALIL).

The protein belongs to the dicarboxylate/amino acid:cation symporter (DAACS) (TC 2.A.23) family.

The protein localises to the cell inner membrane. Responsible for the transport of dicarboxylates such as succinate, fumarate, and malate from the periplasm across the membrane. The protein is C4-dicarboxylate transport protein of Agrobacterium fabrum (strain C58 / ATCC 33970) (Agrobacterium tumefaciens (strain C58)).